A 187-amino-acid chain; its full sequence is Elongation factor P (187 aa).

This sequence belongs to the elongation factor P family.

The protein localises to the cytoplasm. The protein operates within protein biosynthesis; polypeptide chain elongation. Functionally, involved in peptide bond synthesis. Stimulates efficient translation and peptide-bond synthesis on native or reconstituted 70S ribosomes in vitro. Probably functions indirectly by altering the affinity of the ribosome for aminoacyl-tRNA, thus increasing their reactivity as acceptors for peptidyl transferase. The protein is Elongation factor P of Brachyspira hyodysenteriae (strain ATCC 49526 / WA1).